A 188-amino-acid polypeptide reads, in one-letter code: Elongation factor P (188 aa).

Lys34 is modified (N6-(3,6-diaminohexanoyl)-5-hydroxylysine).

This sequence belongs to the elongation factor P family. May be beta-lysylated on the epsilon-amino group of Lys-34 by the combined action of EpmA and EpmB, and then hydroxylated on the C5 position of the same residue by EpmC (if this protein is present). Lysylation is critical for the stimulatory effect of EF-P on peptide-bond formation. The lysylation moiety may extend toward the peptidyltransferase center and stabilize the terminal 3-CCA end of the tRNA. Hydroxylation of the C5 position on Lys-34 may allow additional potential stabilizing hydrogen-bond interactions with the P-tRNA.

The protein localises to the cytoplasm. Its pathway is protein biosynthesis; polypeptide chain elongation. Its function is as follows. Involved in peptide bond synthesis. Alleviates ribosome stalling that occurs when 3 or more consecutive Pro residues or the sequence PPG is present in a protein, possibly by augmenting the peptidyl transferase activity of the ribosome. Modification of Lys-34 is required for alleviation. This chain is Elongation factor P, found in Coxiella burnetii (strain CbuK_Q154) (Coxiella burnetii (strain Q154)).